The sequence spans 371 residues: Peptidyl-prolyl cis-trans isomerase D (371 aa).

The 165-residue stretch at F8–Q172 folds into the PPIase cyclophilin-type domain. Residues S175 to L202 form a disordered region. Positions D189–E201 are enriched in acidic residues. TPR repeat units lie at residues A212–H245, A265–S303, and A308–D341.

This sequence belongs to the cyclophilin-type PPIase family. PPIase D subfamily.

It localises to the cytoplasm. It carries out the reaction [protein]-peptidylproline (omega=180) = [protein]-peptidylproline (omega=0). In terms of biological role, PPIases accelerate the folding of proteins. It catalyzes the cis-trans isomerization of proline imidic peptide bonds in oligopeptides. The chain is Peptidyl-prolyl cis-trans isomerase D (Cyp40) from Amanita muscaria (Fly agaric).